A 220-amino-acid chain; its full sequence is MGAAARSLRLALGLLLLATLPRPADACSCSPVHPQQAFCNADVVIRAKAVSVKEVDSGNDIYGNPIKRIQYEIKQIKMFKGPDKDIEFIYTAPSSAVCGVSLDIGGKKEYLIAGKAEGNGKMHITLCDFIVPWDTLSSTQKKSLNHRYQMGCECKITRCPMIPCYISSPDECLWMDWVTEKSINGHQAKFFACIKRSDGSCAWYRGAAPPKQEFLDIEDP.

The N-terminal stretch at 1–26 (MGAAARSLRLALGLLLLATLPRPADA) is a signal peptide. Residue Cys27 coordinates Zn(2+). Involved in metalloproteinase-binding stretches follow at residues 27–30 (CSCS) and 95–96 (SA). Disulfide bonds link Cys27–Cys98, Cys29–Cys127, Cys39–Cys152, Cys154–Cys201, Cys159–Cys164, and Cys172–Cys193. In terms of domain architecture, NTR spans 27–152 (CSCSPVHPQQ…SLNHRYQMGC (126 aa)).

It belongs to the protease inhibitor I35 (TIMP) family. In terms of assembly, interacts (via the C-terminal) with MMP2 (via the C-terminal PEX domain); the interaction inhibits the MMP2 activity. The activity of TIMP2 is dependent on the presence of disulfide bonds.

The protein resides in the secreted. Its function is as follows. Complexes with metalloproteinases (such as collagenases) and irreversibly inactivates them by binding to their catalytic zinc cofactor. In Canis lupus familiaris (Dog), this protein is Metalloproteinase inhibitor 2 (TIMP2).